Consider the following 400-residue polypeptide: MERFDAIIIGAGAAGMFCSALAGQAGRRVLLIDNGKKPGRKILMSGGGRCNFTNLYVEPGAYLSQNPHFCKSALARFTQWDFIDLVNKHGIAWHEKTLGQLFCDDSAQQIVDMLVDECEKGNVTFRLRSEVLSVAKDETGFTLDLNGMTVGCEKLVIATGGLSMPGLGASPFGYKIAEQFGLNVLPTRAGLVPFTLHKPLLEELQVLAGVAVPSVITAENGTVFRENLLFTHRGLSGPAVLQISSYWQPGEFVSINLLPDVDLETFLNEQRNAHPNQSLKNTLAVHLPKRLVERLQQLGQIPDVSLKQLNVRDQQALISTLTDWRVQPNGTEGYRTAEVTLGGVDTNELSSRTMEARKVPGLYFIGEVMDVTGWLGGYNFQWAWSSAWACAQDLIAAKSS.

FAD-binding residues include A14, D33, N34, R40, G46, N51, V131, E367, and F380.

It belongs to the BaiN/RdsA family. RdsA subfamily. FAD serves as cofactor.

It carries out the reaction a 5,6-dihydrouridine in mRNA + NAD(+) = a uridine in mRNA + NADH + H(+). Its function is as follows. Catalyzes the synthesis of 5,6-dihydrouridine (D) at position 2449 in 23S rRNA. Can use NADH as a source of reducing equivalents but not NADPH. This chain is Ribosomal RNA dihydrouridine synthase, found in Escherichia coli (strain K12).